The chain runs to 1657 residues: Androglobin (1657 aa).

Positions 1–11 are enriched in basic residues; the sequence is MASKQAKRKEV. Disordered regions lie at residues 1 to 40 and 321 to 398; these read MASK…SFEQ and TKEN…SSDV. The Calpain catalytic domain maps to 70 to 402; the sequence is KDKTAKSPIF…RPSSDVQYSM (333 aa). Basic and acidic residues predominate over residues 321 to 386; the sequence is TKENKDGKDG…DGEKEKEKFK (66 aa). The 128-residue stretch at 762 to 889 folds into the Globin; C-terminal part domain; it reads HVCSMTTFVI…EDVSLAEWVD (128 aa). Heme b contacts are provided by Gln791 and His823. An IQ domain is found at 905 to 934; sequence EIAAAVKIQSMWKGCYVRLLMKARKPETKE. The Globin; N-terminal part domain maps to 935–967; it reads NVTVADTLQKIWAVLEMNLEQYALSLLRLMFKS. Disordered regions lie at residues 1184 to 1226, 1288 to 1356, 1422 to 1459, and 1638 to 1657; these read SKQV…TDTG, KHEE…QEDP, TTDT…ADIK, and IEKK…GKKK. The segment covering 1321–1336 has biased composition (basic and acidic residues); that stretch reads EKSAEKEKLAKEKQAP. Composition is skewed to polar residues over residues 1341 to 1351 and 1422 to 1443; these read QQVQMPTAVHS and TTDT…SQTK. Residues 1585 to 1640 are a coiled coil; it reads DEVLEMYGEMRDSVDEARQKILDIREVYRNKLLEAERLRMEALAAQEAAVKIEIEK.

This sequence in the central section; belongs to the globin family. The protein in the N-terminal section; belongs to the peptidase C2 family. As to quaternary structure, interacts with septin SEPT10; contributes to in vitro proteolytic cleavage of SEPT10 in a calmodulin-dependent manner. Interacts with CFAP69. Interacts with SPEF2. May interact with calmodulin. In terms of tissue distribution, strongly expressed in testis and lung. Weakly expressed in heart, brain, spleen, kidney and tongue.

It localises to the cell projection. It is found in the cilium. The protein resides in the flagellum. In terms of biological role, probable chimeric globin with a bis-histidyl six-coordinate heme-iron atom through which it could bind dioxygen, carbon monoxide and nitric oxide. Required for sperm flagellum formation and maturation of elongating spermatids, thus playing an essential role in male fertility. This is Androglobin from Mus musculus (Mouse).